Reading from the N-terminus, the 195-residue chain is Peptidyl-tRNA hydrolase (195 aa).

Tyr18 provides a ligand contact to tRNA. His23 functions as the Proton acceptor in the catalytic mechanism. The tRNA site is built by Tyr69, Asn71, and Asn117.

This sequence belongs to the PTH family. In terms of assembly, monomer.

The protein resides in the cytoplasm. It catalyses the reaction an N-acyl-L-alpha-aminoacyl-tRNA + H2O = an N-acyl-L-amino acid + a tRNA + H(+). Functionally, hydrolyzes ribosome-free peptidyl-tRNAs (with 1 or more amino acids incorporated), which drop off the ribosome during protein synthesis, or as a result of ribosome stalling. In terms of biological role, catalyzes the release of premature peptidyl moieties from peptidyl-tRNA molecules trapped in stalled 50S ribosomal subunits, and thus maintains levels of free tRNAs and 50S ribosomes. This is Peptidyl-tRNA hydrolase from Nitrosomonas eutropha (strain DSM 101675 / C91 / Nm57).